The following is a 311-amino-acid chain: Bifunctional protein FolD (311 aa).

Residues 180 to 182, Ser209, and Ile250 each bind NADP(+); that span reads GRS.

Belongs to the tetrahydrofolate dehydrogenase/cyclohydrolase family. As to quaternary structure, homodimer.

It catalyses the reaction (6R)-5,10-methylene-5,6,7,8-tetrahydrofolate + NADP(+) = (6R)-5,10-methenyltetrahydrofolate + NADPH. The enzyme catalyses (6R)-5,10-methenyltetrahydrofolate + H2O = (6R)-10-formyltetrahydrofolate + H(+). The protein operates within one-carbon metabolism; tetrahydrofolate interconversion. Its function is as follows. Catalyzes the oxidation of 5,10-methylenetetrahydrofolate to 5,10-methenyltetrahydrofolate and then the hydrolysis of 5,10-methenyltetrahydrofolate to 10-formyltetrahydrofolate. The sequence is that of Bifunctional protein FolD from Haloquadratum walsbyi (strain DSM 16790 / HBSQ001).